Consider the following 1065-residue polypeptide: FERM, ARHGEF and pleckstrin domain-containing protein 2 (1065 aa).

Residues 44 to 324 enclose the FERM domain; the sequence is MRIRVKLLDS…EYHTFFRLSD (281 aa). Residues Ser-389 and Ser-440 each carry the phosphoserine modification. 2 disordered regions span residues 406 to 489 and 504 to 534; these read SFYP…LKSH and EQGA…HKHM. Residues 440 to 459 show a composition bias toward low complexity; the sequence is STAAERSSGPSSSDGPSTQS. Positions 524 to 534 are enriched in basic and acidic residues; the sequence is DNQEEQKHKHM. One can recognise a DH domain in the interval 538–729; it reads EAYFIAKEIL…TEVTTELQQS (192 aa). Residues 758–855 enclose the PH 1 domain; that stretch reads EFIREGCLHK…WMQDLNAAIQ (98 aa). Phosphoserine is present on residues Ser-863 and Ser-880. The segment at 874-902 is disordered; the sequence is TRTPRSSDEVSLEESEDGRGNRGSLEGNS. Residues 930–1027 enclose the PH 2 domain; that stretch reads ENQLSGYLLR…WMDVIKRASS (98 aa).

As to quaternary structure, interacts with PLXNA1. Interaction with PLXNA1 or PIP5K1C lowers its guanine nucleotide exchange activity. Dissociates from PLXNA1 when SEMA3A binds to the receptor. Interacts with PIP5K1C via its FERM domain. The interaction with PIP5K1C is enhanced by SEMA3A binding. Interacts with RAC1. As to expression, detected in adult brain, lung and testis. Detected in embryonic hippocampus and brain cortex.

Its function is as follows. Functions as a guanine nucleotide exchange factor that activates RAC1. May have relatively low activity. Plays a role in the response to class 3 semaphorins and remodeling of the actin cytoskeleton. Plays a role in TNFSF11-mediated osteoclast differentiation, especially in podosome rearrangement and reorganization of the actin cytoskeleton. Regulates the activation of ITGB3, integrin signaling and cell adhesion. This chain is FERM, ARHGEF and pleckstrin domain-containing protein 2 (Farp2), found in Mus musculus (Mouse).